The following is a 224-amino-acid chain: 7-cyano-7-deazaguanine synthase (224 aa).

Residue 9–19 coordinates ATP; the sequence is ISGGMDSTLCA. The Zn(2+) site is built by Cys190, Cys198, Cys201, and Cys204.

Belongs to the QueC family. It depends on Zn(2+) as a cofactor.

The enzyme catalyses 7-carboxy-7-deazaguanine + NH4(+) + ATP = 7-cyano-7-deazaguanine + ADP + phosphate + H2O + H(+). It functions in the pathway purine metabolism; 7-cyano-7-deazaguanine biosynthesis. Its function is as follows. Catalyzes the ATP-dependent conversion of 7-carboxy-7-deazaguanine (CDG) to 7-cyano-7-deazaguanine (preQ(0)). This Campylobacter jejuni (strain RM1221) protein is 7-cyano-7-deazaguanine synthase.